The following is a 365-amino-acid chain: Alanine racemase (365 aa).

K32 functions as the Proton acceptor; specific for D-alanine in the catalytic mechanism. The residue at position 32 (K32) is an N6-(pyridoxal phosphate)lysine. Residue R128 participates in substrate binding. The active-site Proton acceptor; specific for L-alanine is Y257. Position 305 (M305) interacts with substrate.

Belongs to the alanine racemase family. It depends on pyridoxal 5'-phosphate as a cofactor.

It carries out the reaction L-alanine = D-alanine. Its pathway is amino-acid biosynthesis; D-alanine biosynthesis; D-alanine from L-alanine: step 1/1. Its function is as follows. Catalyzes the interconversion of L-alanine and D-alanine. May also act on other amino acids. The sequence is that of Alanine racemase (alr) from Francisella philomiragia subsp. philomiragia (strain ATCC 25017 / CCUG 19701 / FSC 153 / O#319-036).